A 411-amino-acid polypeptide reads, in one-letter code: MMVIPVSFKFKTMDDIEVTGKTVLVRVDINSPVDPNDGTILDDTRMRLHAETIRELSDRGARTVVMAHQSRPGKNDFTTLEQHARALSGILRRPVKYVEDIFGSAARENISGLGDGEIILLENVRFYSEEVLKRDPEEQAETHLVRKLAPLLDYFINDAFAAAHRSQPSLVGFALRVPSAAGRVMERELRTLQGALENVERPCVYVLGGVKVDDSIMVMKNVLENGSADLVLTTGLVANIFLAGCGVKIGKVNMDFIKSRGYCDFIKVAKKLKKRFPERIVVPVDVAVCRDGKRVDVPVKKIPNHPIQDIGMETIKLYARRIREARTLFANGPAGVFENPDFSIGTEDILNAISSSEGFSIIGGGHLAAAAVKMGFEDSINHISSGGGASISLLAGEELPAVRVLEESRHP.

Substrate-binding positions include 28 to 30 (DIN), Arg45, 68 to 71 (HQSR), Arg125, and Arg165. ATP contacts are provided by residues Glu338 and 364–367 (GGHL).

It belongs to the phosphoglycerate kinase family. Homodimer.

It localises to the cytoplasm. The enzyme catalyses (2R)-3-phosphoglycerate + ATP = (2R)-3-phospho-glyceroyl phosphate + ADP. It participates in carbohydrate degradation; glycolysis; pyruvate from D-glyceraldehyde 3-phosphate: step 2/5. In Methanothermobacter thermautotrophicus (strain ATCC 29096 / DSM 1053 / JCM 10044 / NBRC 100330 / Delta H) (Methanobacterium thermoautotrophicum), this protein is Phosphoglycerate kinase (pgk).